We begin with the raw amino-acid sequence, 312 residues long: DNA-directed RNA polymerase subunit alpha (312 aa).

The tract at residues 1-225 (MIEFEKPNIT…VEHFKVFESA (225 aa)) is alpha N-terminal domain (alpha-NTD). The segment at 243–312 (KEKKLEMTIE…DLGLSLRQED (70 aa)) is alpha C-terminal domain (alpha-CTD).

It belongs to the RNA polymerase alpha chain family. In terms of assembly, homodimer. The RNAP catalytic core consists of 2 alpha, 1 beta, 1 beta' and 1 omega subunit. When a sigma factor is associated with the core the holoenzyme is formed, which can initiate transcription.

It carries out the reaction RNA(n) + a ribonucleoside 5'-triphosphate = RNA(n+1) + diphosphate. In terms of biological role, DNA-dependent RNA polymerase catalyzes the transcription of DNA into RNA using the four ribonucleoside triphosphates as substrates. This chain is DNA-directed RNA polymerase subunit alpha, found in Lactobacillus helveticus (strain DPC 4571).